Reading from the N-terminus, the 692-residue chain is Threonine--tRNA ligase (692 aa).

Residues 2-59 enclose the TGS domain; sequence AEAHISITVNGEAKEVEASQTGVELFADDKNIIAVRLNGELRDLYTPLHDGDNVESVT. The catalytic stretch occupies residues 255 to 561; the sequence is DHRKLGQEMD…LLEHYAGAFP (307 aa). Cysteine 360, histidine 411, and histidine 538 together coordinate Zn(2+).

It belongs to the class-II aminoacyl-tRNA synthetase family. In terms of assembly, homodimer. Zn(2+) is required as a cofactor.

Its subcellular location is the cytoplasm. The enzyme catalyses tRNA(Thr) + L-threonine + ATP = L-threonyl-tRNA(Thr) + AMP + diphosphate + H(+). In terms of biological role, catalyzes the attachment of threonine to tRNA(Thr) in a two-step reaction: L-threonine is first activated by ATP to form Thr-AMP and then transferred to the acceptor end of tRNA(Thr). Also edits incorrectly charged L-seryl-tRNA(Thr). In Bifidobacterium animalis subsp. lactis (strain AD011), this protein is Threonine--tRNA ligase.